We begin with the raw amino-acid sequence, 450 residues long: Divalent metal cation transporter MntH (450 aa).

11 consecutive transmembrane segments (helical) span residues 34–54 (LSFL…GNWI), 61–81 (AQYG…AMLL), 108–128 (IAII…IAEV), 141–161 (IPLI…LFIM), 170–190 (AIVG…VYIS), 212–232 (GILY…NLYL), 263–283 (IQLS…ASLF), 305–325 (PVLG…ALLA), 361–381 (SLAV…AAKI), 383–403 (QLLV…LIPL), and 422–442 (VNII…YLIV).

Belongs to the NRAMP family.

Its subcellular location is the cell membrane. In terms of biological role, h(+)-stimulated, divalent metal cation uptake system. The sequence is that of Divalent metal cation transporter MntH from Staphylococcus aureus (strain JH1).